We begin with the raw amino-acid sequence, 437 residues long: tRNA pseudouridine synthase Pus10 (437 aa).

One can recognise a THUMP domain in the interval valine 76 to serine 198. Residue aspartate 253 is the Nucleophile of the active site. 2 residues coordinate substrate: tyrosine 321 and tyrosine 394.

This sequence belongs to the pseudouridine synthase Pus10 family.

The enzyme catalyses uridine(54) in tRNA = pseudouridine(54) in tRNA. It catalyses the reaction uridine(55) in tRNA = pseudouridine(55) in tRNA. Its function is as follows. Responsible for synthesis of pseudouridine from uracil-54 and uracil-55 in the psi GC loop of transfer RNAs. The sequence is that of tRNA pseudouridine synthase Pus10 from Aeropyrum pernix (strain ATCC 700893 / DSM 11879 / JCM 9820 / NBRC 100138 / K1).